A 315-amino-acid polypeptide reads, in one-letter code: Initiation factor TFIIB homolog (315 aa).

The protein belongs to the asfivirus C315R family.

Functionally, putative initation factor. The polypeptide is Initiation factor TFIIB homolog (Ornithodoros (relapsing fever ticks)).